Here is a 738-residue protein sequence, read N- to C-terminus: Flowering time control protein FCA (738 aa).

The disordered stretch occupies residues Met1–Arg118. Composition is skewed to gly residues over residues Arg52–Arg70 and Ser81–Gly98. Positions Arg109–Arg118 are enriched in basic and acidic residues. RRM domains lie at Val122 to Gly203 and His213 to Pro293. Disordered stretches follow at residues Asp292 to Leu414 and Gln566 to Pro594. Residues Ser301–Gly311 show a composition bias toward gly residues. Residues His342–Ser358 show a composition bias toward polar residues. A compositionally biased stretch (low complexity) spans Thr368–Thr377. 2 stretches are compositionally biased toward polar residues: residues Phe383 to Met401 and Pro575 to Pro594. Residues Val609–Glu642 form the WW domain. Positions Met670–Ser738 are disordered. Positions Pro683–Gln706 are enriched in low complexity. The segment covering Arg723–Gln732 has biased composition (polar residues).

In terms of assembly, interacts with FY. Binds to SF1, FIK, RPRD1B, Os09g0509000/LOC_Os09g33480 and MADS8. As to expression, mostly expressed in young flowers (panicles) and stems, and also present in young seedlings leaves and roots.

It localises to the nucleus. Functionally, plays a major role in the promotion of the transition of the vegetative meristem to reproductive development. Required for RNA-mediated chromatin silencing of a range of loci in the genome. Cotranscriptionally recognizes aberrant RNA and marks it for silencing. Controls alternative cleavage and polyadenylation on pre-mRNAs and antisense RNAs. Regulates flowering time, seed size and cell volume, probably via the modulation of cell size. The polypeptide is Flowering time control protein FCA (Oryza sativa subsp. japonica (Rice)).